The primary structure comprises 327 residues: Interleukin-12 subunit beta (327 aa).

The signal sequence occupies residues 1–22; it reads MHPQQLVVSWFSLVLLASPIVA. Residues 23-106 form the Ig-like C2-type domain; it reads MWELEKNVYV…LSRSLLLLHK (84 aa). Cys50 and Cys90 are disulfide-bonded. N-linked (GlcNAc...) asparagine glycosylation occurs at Asn223. The Fibronectin type-III domain maps to 238 to 327; it reads PPKNLQLRPL…WSEWASVSCS (90 aa).

This sequence belongs to the IL-12B family. As to quaternary structure, heterodimer with IL12A; disulfide-linked. The heterodimer is known as interleukin IL-12. Heterodimer with IL23A; disulfide-linked. The heterodimer is known as interleukin IL-23. Also secreted as a monomer. Interacts with NBR1; this interaction promotes IL-12 secretion.

Its subcellular location is the secreted. Its function is as follows. Cytokine that can act as a growth factor for activated T and NK cells, enhance the lytic activity of NK/lymphokine-activated killer cells, and stimulate the production of IFN-gamma by resting PBMC. Associates with IL23A to form the IL-23 interleukin, a heterodimeric cytokine which functions in innate and adaptive immunity. IL-23 may constitute with IL-17 an acute response to infection in peripheral tissues. IL-23 binds to a heterodimeric receptor complex composed of IL12RB1 and IL23R, activates the Jak-Stat signaling cascade, stimulates memory rather than naive T-cells and promotes production of pro-inflammatory cytokines. IL-23 induces autoimmune inflammation and thus may be responsible for autoimmune inflammatory diseases and may be important for tumorigenesis. In Bos taurus (Bovine), this protein is Interleukin-12 subunit beta (IL12B).